Here is a 249-residue protein sequence, read N- to C-terminus: Vesicle-associated membrane protein-associated protein A (249 aa).

An N-acetylalanine modification is found at A2. The Cytoplasmic segment spans residues A2 to P227. The 118-residue stretch at I14–E131 folds into the MSP domain. Positions K50–T53 are phosphorylated FFAT motif binding. Residue K125 is modified to N6-acetyllysine. Residues E135 to P144 show a composition bias toward basic and acidic residues. Positions E135–L167 are disordered. S166 is modified (phosphoserine). Positions D169–K205 form a coiled coil. A Phosphothreonine modification is found at T170. Phosphoserine is present on residues S214, S216, and S219. A helical; Anchor for type IV membrane protein membrane pass occupies residues L228–I248.

This sequence belongs to the VAMP-associated protein (VAP) (TC 9.B.17) family. Homodimer; disulfide-linked. Heterodimer with VAPB. Interacts with VAMP1, VAMP2, STX1A, BET1, SEC22C and with the C-terminal domain of OCLN. Interacts (via MSP domain) with OSBPL1A (via FFAT motif). Interacts (via MSP domain) with ZFYVE27; may retain ZFYVE27 in the endoplasmic reticulum and regulate its function in cell projections formation. Interacts with OSBP. Interacts (via C-terminus) with RSAD2/viperin (via C-terminus). Interacts with IFITM3. Interacts with OSBPL3 (phosphorylated form). Interacts with KIF5A in a ZFYVE27-dependent manner. Interacts (via MSP domain) with STARD3 (via phosphorylated FFAT motif); this interaction recruits VAPA to the endosome. Interacts with STARD3NL (via FFAT motif). Interacts with CERT1. Interacts with PLEKHA3 and SACM1L to form a ternary complex. Interacts with VPS13A (via FFAT motif). Interacts with RB1CC1 (via phosphorylated FFAT motif), MIGA2 (via phosphorylated FFAT motif), RMDN3 (via phosphorylated FFAT motif), KCNB1 (via phosphorylated FFAT motif) and KCNB2 (via phosphorylated FFAT motif). Interacts (via MSP domain) with WDR44 (via FFAT-like motif); the interactions connect the endoplasmic reticulum (ER) with the endosomal tubule. In terms of assembly, (Microbial infection) Interacts with HCV protein NS5A and NS5B. Ubiquitous.

Its subcellular location is the endoplasmic reticulum membrane. It is found in the cell membrane. The protein localises to the cell junction. It localises to the tight junction. The protein resides in the nucleus membrane. Functionally, endoplasmic reticulum (ER)-anchored protein that mediates the formation of contact sites between the ER and endosomes via interaction with FFAT motif-containing proteins such as STARD3 or WDR44. STARD3-VAPA interaction enables cholesterol transfer from the ER to endosomes. Via interaction with WDR44 participates in neosynthesized protein export. In addition, recruited to the plasma membrane through OSBPL3 binding. The OSBPL3-VAPA complex stimulates RRAS signaling which in turn attenuates integrin beta-1 (ITGB1) activation at the cell surface. With OSBPL3, may regulate ER morphology. May play a role in vesicle trafficking. This Homo sapiens (Human) protein is Vesicle-associated membrane protein-associated protein A.